The primary structure comprises 96 residues: Uteroglobin (96 aa).

The signal sequence occupies residues 1 to 21; the sequence is MKIAITMAVVMLSVCCSSASS.

The protein belongs to the secretoglobin family. As to quaternary structure, antiparallel homodimer; disulfide-linked. Interaction with LMBR1L is controversial.

It is found in the secreted. Functionally, binds phosphatidylcholine, phosphatidylinositol, polychlorinated biphenyls (PCB) and weakly progesterone, potent inhibitor of phospholipase A2. The protein is Uteroglobin (SCGB1A1) of Mesocricetus auratus (Golden hamster).